Consider the following 294-residue polypeptide: Complement C1q tumor necrosis factor-related protein 2 (294 aa).

An N-terminal signal peptide occupies residues 1-24 (MTIFKKVTTMISWVLLACALPCAA). Residues 42–156 (QLVCSLPGPQ…PGPCSCGSSR (115 aa)) are disordered. Residues 48–150 (PGPQGPPGPP…KGEPGLPGPC (103 aa)) enclose the Collagen-like domain. Residues 50–59 (PQGPPGPPGA) are compositionally biased toward pro residues. Over residues 75 to 87 (DGQDGQDGDRGDS) the composition is skewed to basic and acidic residues. The span at 105–129 (KGKAGAIGRAGPRGPKGVSGTPGKH) shows a compositional bias: low complexity. In terms of domain architecture, C1q spans 154-290 (SSRAKSAFSV…GFLIYADQGD (137 aa)).

May interact with ERFE.

The protein resides in the secreted. Involved in the regulation of lipid metabolism in adipose tissue and liver. In Mus musculus (Mouse), this protein is Complement C1q tumor necrosis factor-related protein 2 (C1qtnf2).